A 1465-amino-acid chain; its full sequence is DNA polymerase III PolC-type (1465 aa).

The 157-residue stretch at 427-583 folds into the Exonuclease domain; it reads YVVFDVETTG…YDAEATGRLL (157 aa).

It belongs to the DNA polymerase type-C family. PolC subfamily.

It is found in the cytoplasm. The enzyme catalyses DNA(n) + a 2'-deoxyribonucleoside 5'-triphosphate = DNA(n+1) + diphosphate. Its function is as follows. Required for replicative DNA synthesis. This DNA polymerase also exhibits 3' to 5' exonuclease activity. The protein is DNA polymerase III PolC-type of Streptococcus pyogenes serotype M1.